The chain runs to 236 residues: Pyridoxal 5'-phosphate synthase subunit PdxT (236 aa).

61–63 (GES) serves as a coordination point for L-glutamine. The Nucleophile role is filled by Cys93. Residues Arg127 and 163-164 (IR) contribute to the L-glutamine site. Catalysis depends on charge relay system residues His215 and Glu217.

It belongs to the glutaminase PdxT/SNO family. In the presence of PdxS, forms a dodecamer of heterodimers. Only shows activity in the heterodimer.

The enzyme catalyses aldehydo-D-ribose 5-phosphate + D-glyceraldehyde 3-phosphate + L-glutamine = pyridoxal 5'-phosphate + L-glutamate + phosphate + 3 H2O + H(+). It carries out the reaction L-glutamine + H2O = L-glutamate + NH4(+). Its pathway is cofactor biosynthesis; pyridoxal 5'-phosphate biosynthesis. Its function is as follows. Catalyzes the hydrolysis of glutamine to glutamate and ammonia as part of the biosynthesis of pyridoxal 5'-phosphate. The resulting ammonia molecule is channeled to the active site of PdxS. This is Pyridoxal 5'-phosphate synthase subunit PdxT from Arthrobacter sp. (strain FB24).